We begin with the raw amino-acid sequence, 166 residues long: uncharacterized protein (166 aa).

4 consecutive transmembrane segments (helical) span residues 7–27 (VLFK…SLFY), 30–50 (FLFA…YCYI), 69–89 (IETL…KSLL), and 92–112 (NSFF…LVLF).

It to M.jannaschii MJ0795.1 and MJ0785.1.

Its subcellular location is the cell membrane. This is an uncharacterized protein from Methanocaldococcus jannaschii (strain ATCC 43067 / DSM 2661 / JAL-1 / JCM 10045 / NBRC 100440) (Methanococcus jannaschii).